Here is a 133-residue protein sequence, read N- to C-terminus: Ribosome-binding factor A (133 aa).

It belongs to the RbfA family. As to quaternary structure, monomer. Binds 30S ribosomal subunits, but not 50S ribosomal subunits or 70S ribosomes.

It localises to the cytoplasm. One of several proteins that assist in the late maturation steps of the functional core of the 30S ribosomal subunit. Associates with free 30S ribosomal subunits (but not with 30S subunits that are part of 70S ribosomes or polysomes). Required for efficient processing of 16S rRNA. May interact with the 5'-terminal helix region of 16S rRNA. The polypeptide is Ribosome-binding factor A (Bordetella pertussis (strain Tohama I / ATCC BAA-589 / NCTC 13251)).